Consider the following 157-residue polypeptide: Endoribonuclease YbeY (157 aa).

The Zn(2+) site is built by His114, His118, and His124.

The protein belongs to the endoribonuclease YbeY family. Zn(2+) is required as a cofactor.

It is found in the cytoplasm. Functionally, single strand-specific metallo-endoribonuclease involved in late-stage 70S ribosome quality control and in maturation of the 3' terminus of the 16S rRNA. This Serratia proteamaculans (strain 568) protein is Endoribonuclease YbeY.